Reading from the N-terminus, the 56-residue chain is Large ribosomal subunit protein eL37 (56 aa).

Residues Cys19, Cys22, Cys34, and Cys37 each coordinate Zn(2+). A C4-type zinc finger spans residues Cys19–Cys37.

Belongs to the eukaryotic ribosomal protein eL37 family. Requires Zn(2+) as cofactor.

Binds to the 23S rRNA. In Methanosarcina mazei (strain ATCC BAA-159 / DSM 3647 / Goe1 / Go1 / JCM 11833 / OCM 88) (Methanosarcina frisia), this protein is Large ribosomal subunit protein eL37.